Consider the following 67-residue polypeptide: Large ribosomal subunit protein bL35 (67 aa).

The protein belongs to the bacterial ribosomal protein bL35 family.

This chain is Large ribosomal subunit protein bL35, found in Mesorhizobium japonicum (strain LMG 29417 / CECT 9101 / MAFF 303099) (Mesorhizobium loti (strain MAFF 303099)).